A 161-amino-acid polypeptide reads, in one-letter code: Ribosome maturation factor RimP (161 aa).

It belongs to the RimP family.

The protein localises to the cytoplasm. Required for maturation of 30S ribosomal subunits. The protein is Ribosome maturation factor RimP of Rickettsia africae (strain ESF-5).